Reading from the N-terminus, the 330-residue chain is ADP-L-glycero-D-manno-heptose-6-epimerase (330 aa).

NADP(+) is bound by residues 11-12 (FI), 32-33 (DN), Lys-39, Lys-54, 75-79 (EGACS), and Asn-92. The active-site Proton acceptor is the Tyr-139. Lys-143 lines the NADP(+) pocket. Asn-168 serves as a coordination point for substrate. Positions 169 and 177 each coordinate NADP(+). The active-site Proton acceptor is Lys-177. Substrate is bound by residues Arg-179, His-186, 200–203 (FGEY), Arg-213, and Tyr-292.

The protein belongs to the NAD(P)-dependent epimerase/dehydratase family. HldD subfamily. As to quaternary structure, homopentamer. Requires NADP(+) as cofactor.

The catalysed reaction is ADP-D-glycero-beta-D-manno-heptose = ADP-L-glycero-beta-D-manno-heptose. Its pathway is nucleotide-sugar biosynthesis; ADP-L-glycero-beta-D-manno-heptose biosynthesis; ADP-L-glycero-beta-D-manno-heptose from D-glycero-beta-D-manno-heptose 7-phosphate: step 4/4. Its function is as follows. Catalyzes the interconversion between ADP-D-glycero-beta-D-manno-heptose and ADP-L-glycero-beta-D-manno-heptose via an epimerization at carbon 6 of the heptose. This Burkholderia ambifaria (strain ATCC BAA-244 / DSM 16087 / CCUG 44356 / LMG 19182 / AMMD) (Burkholderia cepacia (strain AMMD)) protein is ADP-L-glycero-D-manno-heptose-6-epimerase.